The chain runs to 179 residues: Inner membrane-spanning protein YciB (179 aa).

5 consecutive transmembrane segments (helical) span residues 22-42, 50-70, 76-96, 121-141, and 149-169; these read IYAA…YSWV, MALI…FFHN, WKVT…QWVM, LAWA…AFWL, and FKVF…GVYI.

Belongs to the YciB family.

Its subcellular location is the cell inner membrane. In terms of biological role, plays a role in cell envelope biogenesis, maintenance of cell envelope integrity and membrane homeostasis. This is Inner membrane-spanning protein YciB from Salmonella agona (strain SL483).